Reading from the N-terminus, the 434-residue chain is tRNA modification GTPase MnmE (434 aa).

Positions 20, 79, and 119 each coordinate (6S)-5-formyl-5,6,7,8-tetrahydrofolate. The TrmE-type G domain occupies Gly-219–Lys-361. Residues Asn-229–Thr-234, Ala-248–Thr-254, and Asp-273–Gly-276 contribute to the GTP site. Residues Ser-233 and Thr-254 each coordinate Mg(2+). Position 434 (Lys-434) interacts with (6S)-5-formyl-5,6,7,8-tetrahydrofolate.

Belongs to the TRAFAC class TrmE-Era-EngA-EngB-Septin-like GTPase superfamily. TrmE GTPase family. As to quaternary structure, homodimer. Heterotetramer of two MnmE and two MnmG subunits. K(+) is required as a cofactor.

Its subcellular location is the cytoplasm. Functionally, exhibits a very high intrinsic GTPase hydrolysis rate. Involved in the addition of a carboxymethylaminomethyl (cmnm) group at the wobble position (U34) of certain tRNAs, forming tRNA-cmnm(5)s(2)U34. This is tRNA modification GTPase MnmE from Zymomonas mobilis subsp. mobilis (strain ATCC 31821 / ZM4 / CP4).